The following is a 766-amino-acid chain: Hypoxia-inducible factor 1-alpha (766 aa).

The tract at residues 1-26 is disordered; the sequence is MDTGVVPEKKSRVSSDRRKEKSRDAA. Residues 7-26 are compositionally biased toward basic and acidic residues; sequence PEKKSRVSSDRRKEKSRDAA. One can recognise a bHLH domain in the interval 17 to 70; the sequence is RRKEKSRDAARCRRGKESEVFYELAQELPLPHSVTSNLDKASIMRLAISYLHMR. 2 consecutive PAS domains span residues 82–159 and 230–300; these read EERE…TSKK and PHPS…FAKG. The 44-residue stretch at 304-347 folds into the PAC domain; that stretch reads TGQYRMLAKRGGFVWVETQATVIYNNKNSQPQCVVCVNYVLSGI. Residues 361-383 are disordered; the sequence is DMRPVKKELEEEESSEPEVSPVL. At proline 426 the chain carries 4-hydroxyproline. A disordered region spans residues 475-509; that stretch reads DQHLVPNTSVDTTEVSTGPDSSSTPGSHSFTEPDS. The span at 479–489 shows a compositional bias: polar residues; that stretch reads VPNTSVDTTEV. Low complexity predominate over residues 490-503; the sequence is STGPDSSSTPGSHS. Residue proline 559 is modified to 4-hydroxyproline. Positions 718 to 721 match the Nuclear localization signal motif; it reads LLGI. Asparagine 743 carries the post-translational modification (3S)-3-hydroxyasparagine.

Efficient DNA binding requires heterodimerization of an alpha and a beta/ARNT subunit. In terms of processing, in normoxia, is hydroxylated on Pro-426 and Pro-559. The hydroxylated prolines promote interaction with VHL, initiating rapid ubiquitination and subsequent proteasomal degradation. Under hypoxia, proline hydroxylation is impaired and ubiquitination is attenuated, resulting in stabilization. Post-translationally, in normoxia, is hydroxylated on Asn-743, thus abrogating interaction with CREBBP and EP300 and preventing transcriptional activation. The iron and 2-oxoglutarate dependent 3-hydroxylation of asparagine is (S) stereospecific within HIF CTAD domains.

It localises to the cytoplasm. The protein resides in the nucleus. Its subcellular location is the nucleus speckle. Its activity is regulated as follows. Induced by reactive oxygen species (ROS). Its function is as follows. Functions as a master transcriptional regulator of the adaptive response to hypoxia. Under hypoxic conditions, activates the transcription of over 40 genes, including erythropoietin, glucose transporters, glycolytic enzymes, vascular endothelial growth factor, HILPDA, and other genes whose protein products increase oxygen delivery or facilitate metabolic adaptation to hypoxia. Plays an essential role in embryonic vascularization, tumor angiogenesis and pathophysiology of ischemic disease. In Oncorhynchus mykiss (Rainbow trout), this protein is Hypoxia-inducible factor 1-alpha (hif1a).